The primary structure comprises 32 residues: Dermatoxin-J1 (32 aa).

Gln-32 bears the Glutamine amide mark.

As to expression, expressed by the skin glands.

It localises to the secreted. In terms of biological role, antimicrobial peptide. The polypeptide is Dermatoxin-J1 (Phasmahyla jandaia (Jandaia leaf frog)).